Reading from the N-terminus, the 447-residue chain is Na(+)-translocating NADH-quinone reductase subunit A (447 aa).

The protein belongs to the NqrA family. As to quaternary structure, composed of six subunits; NqrA, NqrB, NqrC, NqrD, NqrE and NqrF.

It carries out the reaction a ubiquinone + n Na(+)(in) + NADH + H(+) = a ubiquinol + n Na(+)(out) + NAD(+). Functionally, NQR complex catalyzes the reduction of ubiquinone-1 to ubiquinol by two successive reactions, coupled with the transport of Na(+) ions from the cytoplasm to the periplasm. NqrA to NqrE are probably involved in the second step, the conversion of ubisemiquinone to ubiquinol. This is Na(+)-translocating NADH-quinone reductase subunit A from Neisseria meningitidis serogroup B (strain ATCC BAA-335 / MC58).